The following is a 349-amino-acid chain: N-acetyl-gamma-glutamyl-phosphate reductase (349 aa).

Residue C149 is part of the active site.

It belongs to the NAGSA dehydrogenase family. Type 1 subfamily.

The protein localises to the cytoplasm. The catalysed reaction is N-acetyl-L-glutamate 5-semialdehyde + phosphate + NADP(+) = N-acetyl-L-glutamyl 5-phosphate + NADPH + H(+). The protein operates within amino-acid biosynthesis; L-arginine biosynthesis; N(2)-acetyl-L-ornithine from L-glutamate: step 3/4. Functionally, catalyzes the NADPH-dependent reduction of N-acetyl-5-glutamyl phosphate to yield N-acetyl-L-glutamate 5-semialdehyde. This chain is N-acetyl-gamma-glutamyl-phosphate reductase, found in Acinetobacter baumannii (strain AB307-0294).